The primary structure comprises 346 residues: Protein Rae1 (346 aa).

WD repeat units follow at residues 17–61 (ASPP…ATVP), 64–105 (MKTM…VMQV), 126–148 (LMTG…PMMT), and 255–289 (VNDI…KLKS).

It belongs to the WD repeat rae1 family. As to quaternary structure, interacts with hiw; the interaction with Rae1 may protect hiw from autophagy-mediated degradation. Interacts with Nup98-96. Head (at protein level).

It is found in the cytoplasm. The protein resides in the perinuclear region. The protein localises to the nucleus. Its subcellular location is the nucleus envelope. It localises to the chromosome. Its function is as follows. Probable component of the nuclear pore complex (NPC) which regulates the nuclear export of specific mRNAs and promotes cell cycle progression during mitosis and male meiosis. Acts with Nup98-96 to promote the nuclear export of specific mRNAs such as Moe, however it does not appear to be required for general nuclear mRNA transport. Essential mitotic and male meiotic cell cycle regulator with roles in many aspects of the cell cycle including chromatin organization and condensation, spindle assembly, chromosome segregation, and maintaining nuclear structure. During male meiosis it is required for completion of meiosis I, as well as accurate cytokinesis of the secondary spermatocytes, and postmeiotic differentiation of spermatids. Acts as a downstream regulatory target of the Hippo/SWH (Sav/Wts/Hpo) signaling pathway to promote mitotic cell cycle progression and proliferation during wing and eye development, and thereby plays a key role in integrating the regulation of proliferation with organ size control. When the Hippo/SWH signaling pathway is inactive, Rae1 acts independently of yki to increase organ size by promoting mitotic S-phase entry and increase cellular proliferation. When the Hippo/SWH signaling pathway is active it inhibits the activity of Rae1 in a Wts-dependent manner to restrict organ growth. However, Rae1 is also able to negatively regulate the levels and activity of yki likely by activating the core kinases of the Hippo/SWH signaling pathway hpo and Wts and increasing the protein levels of hpo, Mer and Wts; it is therefore likely that it functions as part of a negative feedback loop with the Hippo/SWH signaling pathway to regulate pathway homeostasis and prevent organ overgrowth. Promotes mitotic cell cycle progression, at least in part, by increasing the accumulation of mitotic cyclins such as CycB, possibly by directly up-regulating cyclin transcripts or by inhibiting the anaphase promoting complex/cyclosome (APC/C) activator fzy. Also required in presynaptic, postmitotic motor neurons to restrain synaptic terminal growth. Promotes the expression and stability of the an E3 ubiquitin ligase of hiw, and is likely to function in the regulation of synaptic growth by binding to hiw and protecting it from autophagy-mediated degradation. In Drosophila melanogaster (Fruit fly), this protein is Protein Rae1.